Here is a 254-residue protein sequence, read N- to C-terminus: MLQTEMKVIQQTEIADKVYELILTGECVAGMSPGQFLMLKPSRSDLLMRRPISICSYDKTAKTCILLYRVEGDGTRDFSKLSEGDTIDVLGPLGKGFDIDTTPAPKTALLIGGGIGVPPMYQLGKELAEKGVQVMFVNGFQSAKDSFYAQEMAEYGTVHIATVDGSLGTQGFVTDITKNFPEEPDVIYSCGPKAMLQAVKASFPETKTYLSLEERMACGIGACYACVCPKADDTNKQFKVCEDGPVFRADEVKL.

An FAD-binding FR-type domain is found at 1–99 (MLQTEMKVIQ…LGPLGKGFDI (99 aa)). FAD is bound by residues 50-53 (RPIS), 67-69 (LYR), and 74-75 (GT). Positions 218, 223, 226, and 241 each coordinate [2Fe-2S] cluster.

The protein belongs to the PyrK family. In terms of assembly, heterotetramer of 2 PyrK and 2 PyrD type B subunits. [2Fe-2S] cluster serves as cofactor. It depends on FAD as a cofactor.

The protein operates within pyrimidine metabolism; UMP biosynthesis via de novo pathway; orotate from (S)-dihydroorotate (NAD(+) route): step 1/1. Functionally, responsible for channeling the electrons from the oxidation of dihydroorotate from the FMN redox center in the PyrD type B subunit to the ultimate electron acceptor NAD(+). The sequence is that of Dihydroorotate dehydrogenase B (NAD(+)), electron transfer subunit from Listeria monocytogenes serovar 1/2a (strain ATCC BAA-679 / EGD-e).